A 327-amino-acid polypeptide reads, in one-letter code: Immediate early response gene 5 protein (327 aa).

Disordered regions lie at residues 59 to 166 (GPAG…GVFP) and 227 to 313 (GPAG…DKPV). A compositionally biased stretch (low complexity) spans 71–84 (QPGEPAAGPPAGWG). The span at 253–262 (GEDDDAEEME) shows a compositional bias: acidic residues. Residues 265–278 (NVANLISIFGSSFS) show a composition bias toward polar residues.

Belongs to the IER family. In terms of assembly, monomer. Homodimer. Associates with the catalytic subunit of protein phosphatase PP2A. Interacts (via N- and C-terminal regions) with PPP2R2B. Interacts with PPP2R2A, PPP2R2C and PPP2R2D. Interacts (via N-terminus) with RPS6KB1. Interacts (via central region) with HSF1; this interaction promotes PPP2CA-induced HSF1 dephosphorylation, leading to enhanced HSF1 transcriptional activity. As to expression, expressed in acute myeloid leukemia (AML) cells.

It localises to the nucleus. The protein resides in the cytoplasm. Functionally, plays a role as a transcription factor. Mediates positive transcriptional regulation of several chaperone genes during the heat shock response in a HSF1-dependent manner. Mediates negative transcriptional regulation of CDC25B expression. Plays a role in the dephosphorylation of the heat shock factor HSF1 and ribosomal protein S6 kinase (S6K) by the protein phosphatase PP2A. Involved in the regulation of cell proliferation and resistance to thermal stress. Involved in the cell cycle checkpoint and survival in response to ionizing radiation. Associates with chromatin to the CDC25B promoter. In Homo sapiens (Human), this protein is Immediate early response gene 5 protein (IER5).